Reading from the N-terminus, the 859-residue chain is Mismatch repair endonuclease PMS2 (859 aa).

ATP-binding residues include N45, D70, E109, A110, and L111. Disordered stretches follow at residues 391-413 (ELEKPVPGKQDNSPSLKSTADEK), 427-455 (LHPTKEIKSRGPETAELTRSFPSEKRGVL), and 469-555 (RGSQ…KPED). Basic and acidic residues-rich tracts occupy residues 427–439 (LHPTKEIKSRGPE) and 485–495 (CMDREKIEKDS). A compositionally biased stretch (polar residues) spans 512 to 525 (EVASSFSSDYNVSS). The Nuclear localization signal signature appears at 574–577 (KRFK). Residues 578-597 (TEERPSNVNISQRLPGPQST) form a disordered region. The span at 583-597 (SNVNISQRLPGPQST) shows a compositional bias: polar residues.

Belongs to the DNA mismatch repair MutL/HexB family. Heterodimer of PMS2 and MLH1 (MutL alpha); this interaction is required for the stability of both partners. Forms a ternary complex with MutS alpha (MSH2-MSH6) or MutS beta (MSH2-MSH3). Part of the BRCA1-associated genome surveillance complex (BASC), which contains BRCA1, MSH2, MSH6, MLH1, ATM, BLM, PMS2 and the RAD50-MRE11-NBS1 protein complex. This association could be a dynamic process changing throughout the cell cycle and within subnuclear domains. Interacts with MTMR15/FAN1.

The protein localises to the nucleus. It catalyses the reaction ATP + H2O = ADP + phosphate + H(+). In terms of biological role, component of the post-replicative DNA mismatch repair system (MMR). Heterodimerizes with MLH1 to form MutL alpha. DNA repair is initiated by MutS alpha (MSH2-MSH6) or MutS beta (MSH2-MSH3) binding to a dsDNA mismatch, then MutL alpha is recruited to the heteroduplex. Assembly of the MutL-MutS-heteroduplex ternary complex in presence of RFC and PCNA is sufficient to activate endonuclease activity of PMS2. It introduces single-strand breaks near the mismatch and thus generates new entry points for the exonuclease EXO1 to degrade the strand containing the mismatch. DNA methylation would prevent cleavage and therefore assure that only the newly mutated DNA strand is going to be corrected. MutL alpha (MLH1-PMS2) interacts physically with the clamp loader subunits of DNA polymerase III, suggesting that it may play a role to recruit the DNA polymerase III to the site of the MMR. Also implicated in DNA damage signaling, a process which induces cell cycle arrest and can lead to apoptosis in case of major DNA damages. Possesses an ATPase activity, but in the absence of gross structural changes, ATP hydrolysis may not be necessary for proficient mismatch repair. The polypeptide is Mismatch repair endonuclease PMS2 (Mus musculus (Mouse)).